A 333-amino-acid chain; its full sequence is T-cell surface glycoprotein CD1b1 (333 aa).

The signal sequence occupies residues 1–17; sequence MLLVALALLAFLFPAGD. Residues 18-302 are Extracellular-facing; that stretch reads TQNALQWPTS…LYWGHSISIG (285 aa). N-linked (GlcNAc...) asparagine glycans are attached at residues asparagine 38, asparagine 75, and asparagine 146. 3 disulfides stabilise this stretch: cysteine 120/cysteine 184, cysteine 149/cysteine 163, and cysteine 224/cysteine 279. Positions 197 to 295 constitute an Ig-like domain; that stretch reads PDIQKQVKPD…LEGQDIILYW (99 aa). A helical transmembrane segment spans residues 303–323; that stretch reads WIILAVLVPCLIVLVLFVLWF. The Cytoplasmic portion of the chain corresponds to 324–333; that stretch reads YRRWSYEDIL. Residues 329–332 carry the Internalization signal motif; it reads YEDI.

In terms of assembly, heterodimer with B2M (beta-2-microglobulin). Interacts with saposin C.

It localises to the cell membrane. It is found in the endosome membrane. Its subcellular location is the lysosome membrane. Functionally, antigen-presenting protein that binds self and non-self lipid and glycolipid antigens and presents them to T-cell receptors on natural killer T-cells. In Cavia porcellus (Guinea pig), this protein is T-cell surface glycoprotein CD1b1 (CD1B1).